The primary structure comprises 312 residues: Apolipoprotein E (312 aa).

The N-terminal stretch at 1–18 is a signal peptide; it reads MKALWALLLVPLLTGCLA. Repeat copies occupy residues 72-93, 94-115, 116-137, 138-159, 160-181, 182-203, 204-225, and 226-247. Residues 72 to 247 are 8 X 22 AA approximate tandem repeats; that stretch reads VLMEDTMTEV…RLEEVRDQME (176 aa). M135 is modified (methionine sulfoxide). S139 carries the post-translational modification Phosphoserine. The segment at 150-160 is LDL and other lipoprotein receptors binding; sequence HLRKMRKRLMR. Positions 150–160 are LDL receptor binding; it reads HLRKMRKRLMR. Residue 154-157 participates in heparin binding; the sequence is MRKR. The interval 202–282 is lipid-binding and lipoprotein association; the sequence is TANLGSGAAQ…GWFEPLVEDM (81 aa). 221-228 serves as a coordination point for heparin; sequence SDRIRGRL. The segment at 258–312 is homooligomerization; it reads QQIRLQAEVFQARLKGWFEPLVEDMQRQWANLMEKIQASVATNSIASTTVPLENQ. The specificity for association with VLDL stretch occupies residues 270–282; that stretch reads RLKGWFEPLVEDM.

It belongs to the apolipoprotein A1/A4/E family. Homotetramer. May interact with ABCA1; functionally associated with ABCA1 in the biogenesis of HDLs. May interact with APP/A4 amyloid-beta peptide; the interaction is extremely stable in vitro but its physiological significance is unclear. May interact with MAPT. May interact with MAP2. In the cerebrospinal fluid, interacts with secreted SORL1. Interacts with PMEL; this allows the loading of PMEL luminal fragment on ILVs to induce fibril nucleation. APOE exists as multiple glycosylated and sialylated glycoforms within cells and in plasma. The extent of glycosylation and sialylation are tissue and context specific. Post-translationally, glycated in plasma VLDL. In terms of processing, phosphorylated by FAM20C in the extracellular medium.

The protein localises to the secreted. It is found in the extracellular space. The protein resides in the extracellular matrix. Its subcellular location is the extracellular vesicle. It localises to the endosome. The protein localises to the multivesicular body. Functionally, APOE is an apolipoprotein, a protein associating with lipid particles, that mainly functions in lipoprotein-mediated lipid transport between organs via the plasma and interstitial fluids. APOE is a core component of plasma lipoproteins and is involved in their production, conversion and clearance. Apolipoproteins are amphipathic molecules that interact both with lipids of the lipoprotein particle core and the aqueous environment of the plasma. As such, APOE associates with chylomicrons, chylomicron remnants, very low density lipoproteins (VLDL) and intermediate density lipoproteins (IDL) but shows a preferential binding to high-density lipoproteins (HDL). It also binds a wide range of cellular receptors including the LDL receptor/LDLR, the LDL receptor-related proteins LRP1, LRP2 and LRP8 and the very low-density lipoprotein receptor/VLDLR that mediate the cellular uptake of the APOE-containing lipoprotein particles. Finally, APOE also has a heparin-binding activity and binds heparan-sulfate proteoglycans on the surface of cells, a property that supports the capture and the receptor-mediated uptake of APOE-containing lipoproteins by cells. A main function of APOE is to mediate lipoprotein clearance through the uptake of chylomicrons, VLDLs, and HDLs by hepatocytes. APOE is also involved in the biosynthesis by the liver of VLDLs as well as their uptake by peripheral tissues ensuring the delivery of triglycerides and energy storage in muscle, heart and adipose tissues. By participating in the lipoprotein-mediated distribution of lipids among tissues, APOE plays a critical role in plasma and tissues lipid homeostasis. APOE is also involved in two steps of reverse cholesterol transport, the HDLs-mediated transport of cholesterol from peripheral tissues to the liver, and thereby plays an important role in cholesterol homeostasis. First, it is functionally associated with ABCA1 in the biogenesis of HDLs in tissues. Second, it is enriched in circulating HDLs and mediates their uptake by hepatocytes. APOE also plays an important role in lipid transport in the central nervous system, regulating neuron survival and sprouting. In Rattus rattus (Black rat), this protein is Apolipoprotein E (Apoe).